Consider the following 141-residue polypeptide: Large ribosomal subunit protein uL11B (141 aa).

It belongs to the universal ribosomal protein uL11 family. In terms of assembly, part of the ribosomal stalk of the 50S ribosomal subunit. Interacts with L10 and the large rRNA to form the base of the stalk. L10 forms an elongated spine to which L12 dimers bind in a sequential fashion forming a multimeric L10(L12)X complex. Post-translationally, one or more lysine residues are methylated.

Functionally, forms part of the ribosomal stalk which helps the ribosome interact with GTP-bound translation factors. In Halalkalibacterium halodurans (strain ATCC BAA-125 / DSM 18197 / FERM 7344 / JCM 9153 / C-125) (Bacillus halodurans), this protein is Large ribosomal subunit protein uL11B.